The following is a 172-amino-acid chain: dCTP deaminase (172 aa).

DCTP-binding positions include 97-102 (RSSFAR) and Asp113. Catalysis depends on Glu123, which acts as the Proton donor/acceptor. 2 residues coordinate dCTP: Tyr155 and Gln162.

This sequence belongs to the dCTP deaminase family. In terms of assembly, homotrimer.

The enzyme catalyses dCTP + H2O + H(+) = dUTP + NH4(+). It functions in the pathway pyrimidine metabolism; dUMP biosynthesis; dUMP from dCTP (dUTP route): step 1/2. In terms of biological role, catalyzes the deamination of dCTP to dUTP. This chain is dCTP deaminase, found in Metallosphaera sedula (strain ATCC 51363 / DSM 5348 / JCM 9185 / NBRC 15509 / TH2).